Reading from the N-terminus, the 302-residue chain is Stanniocalcin-2 (302 aa).

The N-terminal stretch at 1–24 (MCAERLGQFMTLALVLATFDPARG) is a signal peptide. The tract at residues 23–44 (RGTDATNPPEGPQDRSSQQKGR) is disordered. The N-linked (GlcNAc...) asparagine glycan is linked to Asn73. The interval 217-302 (KPPTAPPERQ…EQSEYSDIRR (86 aa)) is disordered. Residues 227–264 (PQVDRTKLSRAHHGEAGHHLPEPSSRETGRGAKGERGS) are compositionally biased toward basic and acidic residues. Ser250 and Ser251 each carry phosphoserine; by FAM20C. Residue Thr254 is modified to Phosphothreonine; by FAM20C.

It belongs to the stanniocalcin family. Homodimer; disulfide-linked. Expressed in a variety of tissues including muscle, heart, pancreas, kidney, spleen, prostate, small intestine, colon and peripheral blood leukocytes.

It localises to the secreted. Has an anti-hypocalcemic action on calcium and phosphate homeostasis. The protein is Stanniocalcin-2 (STC2) of Homo sapiens (Human).